Reading from the N-terminus, the 265-residue chain is ATP synthase subunit a (265 aa).

5 consecutive transmembrane segments (helical) span residues 25–45, 88–108, 142–162, 207–227, and 233–253; these read FWAVNVDTIFWSVLLGVLFLW, IAPLALTIFVWIFLMNLMDLI, DLNTTFALSLSVFALIIIYSI, LFGNMYAGELIFILIAMIGFW, and FAWAVFHILVITLQAFIFMML.

It belongs to the ATPase A chain family. In terms of assembly, F-type ATPases have 2 components, CF(1) - the catalytic core - and CF(0) - the membrane proton channel. CF(1) has five subunits: alpha(3), beta(3), gamma(1), delta(1), epsilon(1). CF(0) has three main subunits: a(1), b(2) and c(9-12). The alpha and beta chains form an alternating ring which encloses part of the gamma chain. CF(1) is attached to CF(0) by a central stalk formed by the gamma and epsilon chains, while a peripheral stalk is formed by the delta and b chains.

It localises to the cell inner membrane. In terms of biological role, key component of the proton channel; it plays a direct role in the translocation of protons across the membrane. This chain is ATP synthase subunit a, found in Idiomarina loihiensis (strain ATCC BAA-735 / DSM 15497 / L2-TR).